Consider the following 134-residue polypeptide: ATP synthase epsilon chain (134 aa).

The protein belongs to the ATPase epsilon chain family. F-type ATPases have 2 components, CF(1) - the catalytic core - and CF(0) - the membrane proton channel. CF(1) has five subunits: alpha(3), beta(3), gamma(1), delta(1), epsilon(1). CF(0) has three main subunits: a, b and c.

Its subcellular location is the cell membrane. Its function is as follows. Produces ATP from ADP in the presence of a proton gradient across the membrane. This is ATP synthase epsilon chain from Ruminiclostridium cellulolyticum (strain ATCC 35319 / DSM 5812 / JCM 6584 / H10) (Clostridium cellulolyticum).